Reading from the N-terminus, the 138-residue chain is Large ribosomal subunit protein uL16 (138 aa).

Basic residues predominate over residues 1–17 (MLIPRKVKHRKQHHPRQ). The interval 1-23 (MLIPRKVKHRKQHHPRQRGIASG) is disordered.

It belongs to the universal ribosomal protein uL16 family. As to quaternary structure, part of the 50S ribosomal subunit.

Functionally, binds 23S rRNA and is also seen to make contacts with the A and possibly P site tRNAs. The protein is Large ribosomal subunit protein uL16 of Mycobacterium sp. (strain JLS).